The primary structure comprises 475 residues: Fez family zinc finger protein 1 (475 aa).

The Engrailed homology 1 repressor motif lies at 28-43 (PLAFSIERIMARTPEP). 6 C2H2-type zinc fingers span residues 260-282 (FTCE…MPVH), 288-310 (FVCK…KIIH), 316-338 (HKCN…TRIH), 344-366 (FVCE…KLTH), 372-394 (FKCN…MHTH), and 400-423 (FTCP…RKLH). The interval 428–475 (GLARTPAGEPGTEPPPPLPQQPPMTLPPLQPPLPTPGPLQPGLHQGHQ) is disordered. Residues 439–466 (TEPPPPLPQQPPMTLPPLQPPLPTPGPL) show a composition bias toward pro residues.

The protein belongs to the krueppel C2H2-type zinc-finger protein family. In terms of tissue distribution, expressed in brain. Little or no expression in other tissues. Overexpressed specifically in gastric cancers. A 2- to 20-fold increase is found in over 50% of gastric cancer tissues.

It localises to the nucleus. Its function is as follows. Transcription repressor. Involved in the axonal projection and proper termination of olfactory sensory neurons (OSN). Plays a role in rostro-caudal patterning of the diencephalon and in prethalamic formation. Expression is required in OSN to cell-autonomously regulate OSN axon projections. Regulates non-cell-autonomously the layer formation of the olfactory bulb development and the interneurons. May be required for correct rostral migration of the interneuron progenitors. In Homo sapiens (Human), this protein is Fez family zinc finger protein 1 (FEZF1).